An 894-amino-acid chain; its full sequence is Cell wall-associated protease (894 aa).

A signal peptide spans 1-31; sequence MKRRKFSSVVAAVLIFALIFSLFSPGTKAAA. A Peptidase S8 domain is found at 422–729; the sequence is QWPLKNNGEN…YGRLNVMKAV (308 aa). Catalysis depends on charge relay system residues D462, H497, and S650.

The protein belongs to the peptidase S8 family. In terms of processing, proteolytically cleaved to yield CWBP23 and CWBP52.

The protein localises to the secreted. The protein resides in the cell wall. Its activity is regulated as follows. Inhibited by PMSF. In terms of biological role, CWBP52 is a serine-type protease that could be involved in proteoglycan peptide bridges. The protein is Cell wall-associated protease (wprA) of Bacillus subtilis (strain 168).